A 226-amino-acid polypeptide reads, in one-letter code: Enolase-phosphatase E1 (226 aa).

Belongs to the HAD-like hydrolase superfamily. MasA/MtnC family. As to quaternary structure, monomer. The cofactor is Mg(2+).

It catalyses the reaction 5-methylsulfanyl-2,3-dioxopentyl phosphate + H2O = 1,2-dihydroxy-5-(methylsulfanyl)pent-1-en-3-one + phosphate. Its pathway is amino-acid biosynthesis; L-methionine biosynthesis via salvage pathway; L-methionine from S-methyl-5-thio-alpha-D-ribose 1-phosphate: step 3/6. The protein operates within amino-acid biosynthesis; L-methionine biosynthesis via salvage pathway; L-methionine from S-methyl-5-thio-alpha-D-ribose 1-phosphate: step 4/6. Its function is as follows. Bifunctional enzyme that catalyzes the enolization of 2,3-diketo-5-methylthiopentyl-1-phosphate (DK-MTP-1-P) into the intermediate 2-hydroxy-3-keto-5-methylthiopentenyl-1-phosphate (HK-MTPenyl-1-P), which is then dephosphorylated to form the acireductone 1,2-dihydroxy-3-keto-5-methylthiopentene (DHK-MTPene). This Shewanella pealeana (strain ATCC 700345 / ANG-SQ1) protein is Enolase-phosphatase E1.